A 280-amino-acid polypeptide reads, in one-letter code: Shikimate kinase (280 aa).

74 to 84 (PGGSGLGSSSA) contributes to the ATP binding site.

Belongs to the GHMP kinase family. Archaeal shikimate kinase subfamily.

The protein localises to the cytoplasm. The enzyme catalyses shikimate + ATP = 3-phosphoshikimate + ADP + H(+). It participates in metabolic intermediate biosynthesis; chorismate biosynthesis; chorismate from D-erythrose 4-phosphate and phosphoenolpyruvate: step 5/7. This is Shikimate kinase (aroK) from Archaeoglobus fulgidus (strain ATCC 49558 / DSM 4304 / JCM 9628 / NBRC 100126 / VC-16).